The chain runs to 148 residues: Large ribosomal subunit protein bL9 (148 aa).

This sequence belongs to the bacterial ribosomal protein bL9 family.

Its function is as follows. Binds to the 23S rRNA. The chain is Large ribosomal subunit protein bL9 from Finegoldia magna (strain ATCC 29328 / DSM 20472 / WAL 2508) (Peptostreptococcus magnus).